The primary structure comprises 705 residues: Forkhead box protein P1 (705 aa).

A compositionally biased stretch (polar residues) spans 1–19; sequence MMQESGSETKSNGSAIQNG. The disordered stretch occupies residues 1-41; the sequence is MMQESGSETKSNGSAIQNGSSGGNHLLECGALRDTRSNGEA. Ser-113 carries the phosphoserine modification. Disordered stretches follow at residues 267–286 and 291–326; these read HTAE…TSTC and APSK…EHPH. 2 stretches are compositionally biased toward polar residues: residues 276–286 and 291–311; these read NHSSLDLTSTC and APSK…QLSV. A compositionally biased stretch (basic and acidic residues) spans 314–326; the sequence is PKRESLSHEEHPH. Residue Lys-315 forms a Glycyl lysine isopeptide (Lys-Gly) (interchain with G-Cter in SUMO2) linkage. Residues 334–359 form a C2H2-type zinc finger; it reads GVCKWPGCEAVCDDFPAFLKHLNSEH. Positions 376-397 are leucine-zipper; the sequence is VQQLELQLAKDKERLQAMMTHL. Glycyl lysine isopeptide (Lys-Gly) (interchain with G-Cter in SUMO2) cross-links involve residues Lys-400 and Lys-405. Positions 410–414 are CTBP1-binding; the sequence is PLNLV. The segment covering 418–431 has biased composition (polar residues); sequence TLSKSASEASPQSL. Residues 418-450 are disordered; it reads TLSKSASEASPQSLPHTPTTPTAPLTPVTQGPS. The segment covering 432-446 has biased composition (low complexity); sequence PHTPTTPTAPLTPVT. Residue Lys-470 forms a Glycyl lysine isopeptide (Lys-Gly) (interchain with G-Cter in SUMO2) linkage. Positions 493-583 form a DNA-binding region, fork-head; it reads RPPFTYASLI…PQKISGNPSL (91 aa). The tract at residues 639–705 is disordered; the sequence is EHTNSNESDS…EDEPVNEDME (67 aa). Residues 640–651 show a composition bias toward polar residues; sequence HTNSNESDSSPG. Residue Thr-681 is modified to Phosphothreonine. Ser-686 bears the Phosphoserine mark. Positions 695-705 are enriched in acidic residues; the sequence is YEDEPVNEDME.

Forms homodimers and heterodimers with FOXP2 and FOXP4. Dimerization is required for DNA-binding. Self-associates. Interacts with CTBP1. Interacts with NCOR2 and AR. Interacts with FOXP2. Interacts with TBR1. Interacts with AURKA; this interaction facilitates the phosphorylation of FOXP1, which suppresses the expression of FBXL7. Interacts with ZMYM2. As to expression, isoform 5 is specifically expressed in embryonic stem cells. Highest expression in the lung, brain, and spleen. Lower expression in heart, skeletal muscle, kidney, small intestine (isoform 3 not present) and liver.

It localises to the nucleus. Its function is as follows. Transcriptional repressor. Can act with CTBP1 to synergistically repress transcription but CTPBP1 is not essential. Plays an important role in the specification and differentiation of lung epithelium. Acts cooperatively with FOXP4 to regulate lung secretory epithelial cell fate and regeneration by restricting the goblet cell lineage program; the function may involve regulation of AGR2. Essential transcriptional regulator of B-cell development. Involved in regulation of cardiac muscle cell proliferation. Involved in the columnar organization of spinal motor neurons. Promotes the formation of the lateral motor neuron column (LMC) and the preganglionic motor column (PGC) and is required for respective appropriate motor axon projections. The segment-appropriate generation of spinal cord motor columns requires cooperation with other Hox proteins. Can regulate PITX3 promoter activity; may promote midbrain identity in embryonic stem cell-derived dopamine neurons by regulating PITX3. Negatively regulates the differentiation of T follicular helper cells T(FH)s. Involved in maintenance of hair follicle stem cell quiescence; the function probably involves regulation of FGF18. Represses transcription of various pro-apoptotic genes and cooperates with NF-kappa B-signaling in promoting B-cell expansion by inhibition of caspase-dependent apoptosis. Binds to CSF1R promoter elements and is involved in regulation of monocyte differentiation and macrophage functions; repression of CSF1R in monocytes seems to involve NCOR2 as corepressor. Involved in endothelial cell proliferation, tube formation and migration indicative for a role in angiogenesis; the role in neovascularization seems to implicate suppression of SEMA5B. Can negatively regulate androgen receptor signaling. Acts as a transcriptional activator of the FBXL7 promoter; this activity is regulated by AURKA. Functionally, involved in transcriptional regulation in embryonic stem cells (ESCs). Stimulates expression of transcription factors that are required for pluripotency and decreases expression of differentiation-associated genes. Has distinct DNA-binding specifities as compared to the canonical form and preferentially binds DNA with the sequence 5'-CGATACAA-3' (or closely related sequences). Promotes ESC self-renewal and pluripotency. The sequence is that of Forkhead box protein P1 (Foxp1) from Mus musculus (Mouse).